Here is a 124-residue protein sequence, read N- to C-terminus: Small ribosomal subunit protein uS12 (124 aa).

Residues 1–32 form a disordered region; the sequence is MPTINQLVRKGRRDKTAKVKTAALKGSPQRRG. Aspartate 89 is subject to 3-methylthioaspartic acid. Residues 104 to 124 form a disordered region; sequence TQGVKGRKQARSRYGAKKEKS. A compositionally biased stretch (basic residues) spans 108–118; sequence KGRKQARSRYG.

This sequence belongs to the universal ribosomal protein uS12 family. In terms of assembly, part of the 30S ribosomal subunit. Contacts proteins S8 and S17. May interact with IF1 in the 30S initiation complex.

Its function is as follows. With S4 and S5 plays an important role in translational accuracy. In terms of biological role, interacts with and stabilizes bases of the 16S rRNA that are involved in tRNA selection in the A site and with the mRNA backbone. Located at the interface of the 30S and 50S subunits, it traverses the body of the 30S subunit contacting proteins on the other side and probably holding the rRNA structure together. The combined cluster of proteins S8, S12 and S17 appears to hold together the shoulder and platform of the 30S subunit. This is Small ribosomal subunit protein uS12 from Rhodococcus jostii (strain RHA1).